The chain runs to 482 residues: UDP-N-acetylmuramate--L-alanine ligase (482 aa).

129 to 135 lines the ATP pocket; it reads GTHGKTT.

The protein belongs to the MurCDEF family.

The protein resides in the cytoplasm. It carries out the reaction UDP-N-acetyl-alpha-D-muramate + L-alanine + ATP = UDP-N-acetyl-alpha-D-muramoyl-L-alanine + ADP + phosphate + H(+). It participates in cell wall biogenesis; peptidoglycan biosynthesis. Cell wall formation. This Acinetobacter baylyi (strain ATCC 33305 / BD413 / ADP1) protein is UDP-N-acetylmuramate--L-alanine ligase.